Consider the following 473-residue polypeptide: Glutamate--tRNA ligase 1 (473 aa).

Positions 10–20 (PSPTGFLHIGG) match the 'HIGH' region motif. The 'KMSKS' region signature appears at 252-256 (KLSKR). Residue Lys255 coordinates ATP.

Belongs to the class-I aminoacyl-tRNA synthetase family. Glutamate--tRNA ligase type 1 subfamily. Monomer.

It localises to the cytoplasm. It carries out the reaction tRNA(Glu) + L-glutamate + ATP = L-glutamyl-tRNA(Glu) + AMP + diphosphate. Catalyzes the attachment of glutamate to tRNA(Glu) in a two-step reaction: glutamate is first activated by ATP to form Glu-AMP and then transferred to the acceptor end of tRNA(Glu). This Wolbachia pipientis wMel protein is Glutamate--tRNA ligase 1.